The following is a 642-amino-acid chain: MGKIIGIDLGTTNSCVAVMDGDSAKVIENSEGTRTTPSIIAFSDGEVLVGQPAKRQAVTNPKNTLYAIKRLIGRRFDEKEVQKDINLVPYNIVKSDNGDAWVEIDGKKMAPPEISARILQKMKKTVEDYLGETITEAVITVPAYFNDSQRQATKDAGRIAGLEVKRIINEPTAAALAYGIDRGAKDAKIAVYDLGGGTFDISIIETIDLDEEGQQFEVLATNGDTFLGGEDFDRRIIDYLVNEFKKEQGIDLTSDSLALQRLKEAAEKAKIELSSSQQTDINLPYITADASGPKHMNLKLTRAKLESLVADLIERSLEPCRIAMKDAGLSNSDITDVILVGGQTRMPKVQEAVKNFFGKEPRKDVNPDEAVAMGAAIQGGVLGGQVKDVLLLDVTPLSLGIETLGGVMTKLIEKNTTIPTKASQIFSTAEDNQSAVTIHILQGERQQASANKSLGRFDLSDIPPAPRGMPQIEVSFDIDANGILNVSAKDKQTGKEQSIIIKASSGLSDEEVARMVKDAEAHAEEDRKFQERIETKNSAESMINGVEKAISELGDEVTSDEKEKTEAAIKALREVMKGEDSDAIKEKTNALMEAASSIMQKAYAKMTEKQQSDDGAGTQNADHKEDDVVDADFEEVKSDKKD.

Threonine 198 carries the post-translational modification Phosphothreonine; by autocatalysis. A disordered region spans residues 602–642 (AYAKMTEKQQSDDGAGTQNADHKEDDVVDADFEEVKSDKKD).

The protein belongs to the heat shock protein 70 family.

In terms of biological role, acts as a chaperone. This chain is Chaperone protein DnaK, found in Dichelobacter nodosus (strain VCS1703A).